A 450-amino-acid chain; its full sequence is Ribulose bisphosphate carboxylase large chain (450 aa).

The residue at position 4 (lysine 4) is an N6,N6,N6-trimethyllysine. The substrate site is built by asparagine 113 and threonine 163. The active-site Proton acceptor is the lysine 165. Position 167 (lysine 167) interacts with substrate. Mg(2+)-binding residues include lysine 191, aspartate 193, and glutamate 194. Residue lysine 191 is modified to N6-carboxylysine. Histidine 284 functions as the Proton acceptor in the catalytic mechanism. Residues arginine 285, histidine 317, and serine 369 each contribute to the substrate site.

This sequence belongs to the RuBisCO large chain family. Type I subfamily. As to quaternary structure, heterohexadecamer of 8 large chains and 8 small chains; disulfide-linked. The disulfide link is formed within the large subunit homodimers. Mg(2+) serves as cofactor. Post-translationally, the disulfide bond which can form in the large chain dimeric partners within the hexadecamer appears to be associated with oxidative stress and protein turnover.

Its subcellular location is the plastid. It localises to the chloroplast. It carries out the reaction 2 (2R)-3-phosphoglycerate + 2 H(+) = D-ribulose 1,5-bisphosphate + CO2 + H2O. The catalysed reaction is D-ribulose 1,5-bisphosphate + O2 = 2-phosphoglycolate + (2R)-3-phosphoglycerate + 2 H(+). In terms of biological role, ruBisCO catalyzes two reactions: the carboxylation of D-ribulose 1,5-bisphosphate, the primary event in carbon dioxide fixation, as well as the oxidative fragmentation of the pentose substrate in the photorespiration process. Both reactions occur simultaneously and in competition at the same active site. In Crassula rupestris subsp. marnieriana (Pygmyweed), this protein is Ribulose bisphosphate carboxylase large chain.